Here is a 301-residue protein sequence, read N- to C-terminus: Homoserine O-acetyltransferase (301 aa).

Cys-142 acts as the Acyl-thioester intermediate in catalysis. Residues Lys-163 and Ser-192 each contribute to the substrate site. The Proton acceptor role is filled by His-235. Residue Glu-237 is part of the active site. Residue Arg-249 coordinates substrate.

The protein belongs to the MetA family.

It localises to the cytoplasm. It carries out the reaction L-homoserine + acetyl-CoA = O-acetyl-L-homoserine + CoA. The protein operates within amino-acid biosynthesis; L-methionine biosynthesis via de novo pathway; O-acetyl-L-homoserine from L-homoserine: step 1/1. Functionally, transfers an acetyl group from acetyl-CoA to L-homoserine, forming acetyl-L-homoserine. This chain is Homoserine O-acetyltransferase, found in Bacillus anthracis (strain A0248).